Here is an 81-residue protein sequence, read N- to C-terminus: Putative defensin-like protein 31 (81 aa).

A signal peptide spans 1-26 (MTSSSKCLFFVFLCLAALLTPYLAEA). 3 disulfide bridges follow: Cys38/Cys58, Cys44/Cys70, and Cys48/Cys72.

The protein belongs to the DEFL family.

The protein localises to the secreted. This is Putative defensin-like protein 31 from Arabidopsis thaliana (Mouse-ear cress).